The sequence spans 569 residues: Dolichol kinase EVAN (569 aa).

Residues 1 to 22 (MKTTATSFVTGERVVVFVVVSR) lie on the Cytoplasmic side of the membrane. The chain crosses the membrane as a helical span at residues 23-43 (ILLSLPLSLISHGFSLFLLSL). The Lumenal segment spans residues 44–67 (SAFLVEIRVETSPFLLSHFSSRRG). A helical membrane pass occupies residues 68–88 (ASSGILLGAVTLPSVMISKLV). Over 89 to 108 (QLSRAISIHEAEQDELAHVT) the chain is Cytoplasmic. Residues 109–129 (MQYWAASASCCAILIYLSVIM) form a helical membrane-spanning segment. Over 130 to 147 (SQVRKDESLSSSSIWLTR) the chain is Lumenal. A helical membrane pass occupies residues 148 to 168 (VSLTGTVLYGVACFVSLSMIS). Over 169-178 (HTGLNTSLKM) the chain is Cytoplasmic. Residues 179–199 (LWMLFHGLAAVKLIRHLLCTF) form a helical membrane-spanning segment. Residues 200 to 207 (PSCASIGE) lie on the Lumenal side of the membrane. Residues 208 to 228 (ALLVTSGLVLYFGDFLACTIA) form a helical membrane-spanning segment. The Cytoplasmic portion of the chain corresponds to 229-252 (KIFEKLIPVDLVSISYGIKRTETG). The chain crosses the membrane as a helical span at residues 253-273 (IIVQGLLLGLLLFPMVFRFVL). Topologically, residues 274–296 (HIYESSLRKRDARQRNCSDAAKS) are lumenal. Asn289 carries an N-linked (GlcNAc...) asparagine glycan. A helical transmembrane segment spans residues 297 to 317 (VLFFVSLLFFMVVAVPSWMQF). Over 318 to 340 (VHDFNQHPFLWVLTFVFSEPLKR) the chain is Cytoplasmic. A helical transmembrane segment spans residues 341–361 (LSLCIYWILLIVVSVSRFYNI). At 362-369 (SRSSKVER) the chain is on the lumenal side. The chain crosses the membrane as a helical span at residues 370–390 (ILLRKYYHLMAVLMFLPALVL). The Cytoplasmic segment spans residues 391-393 (QPK). A helical membrane pass occupies residues 394–414 (FLDLAFGAALAVFVALEIIRI). Residues 415-440 (WRIQPLGEPLHQFMNAFTDHRDSEHL) lie on the Lumenal side of the membrane. Residues 441-461 (IVSHFSLLLGCALPIWMSSGF) form a helical membrane-spanning segment. The Cytoplasmic segment spans residues 462–464 (NDR). A helical membrane pass occupies residues 465-485 (ALSPFAGILSLGIGDTMASMV). Residues 486–508 (GHKYGVLRWSKTGKKTVEGTAAG) are Lumenal-facing. Residues 487-503 (HKYGVLRWSKTGKKTVE) are CTP-binding. A helical transmembrane segment spans residues 509-529 (ITSMMAVCFVLVPILASMGYI). The Cytoplasmic portion of the chain corresponds to 530–548 (LSQGWWSLLVAVTATGMLE). A helical membrane pass occupies residues 549 to 569 (AYTAQLDNAFIPLVFYSLLCL).

This sequence belongs to the polyprenol kinase family.

It localises to the endoplasmic reticulum membrane. The catalysed reaction is a di-trans,poly-cis-dolichol + CTP = a di-trans,poly-cis-dolichyl phosphate + CDP + H(+). Its function is as follows. Essential for pollen development. Involved in protein N-glycosylation in the endoplasmic reticulum (ER), especially in the female gametophyte. Mediates pollen tube (PT) reception in synergids through protein glycosylation. The protein is Dolichol kinase EVAN of Arabidopsis thaliana (Mouse-ear cress).